The primary structure comprises 724 residues: Tripartite terminase subunit 1 (724 aa).

The C3H1-type zinc finger occupies Cys175–His203. Residues Gly410–Ala445 form a disordered region. Positions Gly419–Gly430 are enriched in gly residues. Position 652-659 (Phe652–Gly659) interacts with ATP.

Belongs to the herpesviridae TRM1 protein family. As to quaternary structure, associates with TRM2 and TRM3 to form the tripartite terminase complex. Interacts with portal protein.

Its subcellular location is the host nucleus. Component of the molecular motor that translocates viral genomic DNA in empty capsid during DNA packaging. Forms a tripartite terminase complex together with TRM2 and TRM3 in the host cytoplasm. Once the complex reaches the host nucleus, it interacts with the capsid portal vertex. This portal forms a ring in which genomic DNA is translocated into the capsid. TRM1 carries an endonuclease activity that plays an important role for the cleavage of concatemeric viral DNA into unit length genomes. This chain is Tripartite terminase subunit 1, found in Suid herpesvirus 1 (strain Indiana-Funkhauser / Becker) (SuHV-1).